Reading from the N-terminus, the 119-residue chain is uncharacterized protein (119 aa).

This is an uncharacterized protein from Vaccinia virus (strain Copenhagen) (VACV).